The chain runs to 426 residues: Phosphomethylpyrimidine synthase (426 aa).

Substrate is bound by residues methionine 94, tyrosine 123, histidine 162, 184-186 (SRG), 225-228 (NGMR), and glutamate 264. Histidine 268 is a binding site for Zn(2+). Residue tyrosine 291 participates in substrate binding. Histidine 332 lines the Zn(2+) pocket. Positions 406, 409, and 413 each coordinate [4Fe-4S] cluster.

Belongs to the ThiC family. It depends on [4Fe-4S] cluster as a cofactor.

The enzyme catalyses 5-amino-1-(5-phospho-beta-D-ribosyl)imidazole + S-adenosyl-L-methionine = 4-amino-2-methyl-5-(phosphooxymethyl)pyrimidine + CO + 5'-deoxyadenosine + formate + L-methionine + 3 H(+). It functions in the pathway cofactor biosynthesis; thiamine diphosphate biosynthesis. Catalyzes the synthesis of the hydroxymethylpyrimidine phosphate (HMP-P) moiety of thiamine from aminoimidazole ribotide (AIR) in a radical S-adenosyl-L-methionine (SAM)-dependent reaction. The protein is Phosphomethylpyrimidine synthase of Methanospirillum hungatei JF-1 (strain ATCC 27890 / DSM 864 / NBRC 100397 / JF-1).